A 123-amino-acid chain; its full sequence is PTS system glucitol/sorbitol-specific EIIA component (123 aa).

The PTS EIIA type-5 domain maps to 1-116 (MTVIYQTTIT…PDDIAPGSVL (116 aa)). His-43 serves as the catalytic Tele-phosphohistidine intermediate. Position 43 is a phosphohistidine; by HPr (His-43).

The protein localises to the cytoplasm. The phosphoenolpyruvate-dependent sugar phosphotransferase system (sugar PTS), a major carbohydrate active transport system, catalyzes the phosphorylation of incoming sugar substrates concomitantly with their translocation across the cell membrane. The enzyme II complex composed of SrlA, SrlB and SrlE is involved in glucitol/sorbitol transport. The sequence is that of PTS system glucitol/sorbitol-specific EIIA component (srlB) from Shigella flexneri.